Consider the following 456-residue polypeptide: Pantothenate kinase 2, mitochondrial (456 aa).

The interval 16 to 89 (AGRFGAPMER…TSAGRPRAEG (74 aa)) is disordered. 2 stretches are compositionally biased toward low complexity: residues 28-39 (RAAATSAAVGES) and 55-65 (SSAAPSGSGEA). Phosphoserine occurs at positions 55, 56, and 75. Residues 154-161 (LELKDLTL) carry the Nuclear export signal motif. Catalysis depends on Glu224, which acts as the Proton acceptor. 3 residues coordinate acetyl-CoA: Ser278, Ser281, and Arg293.

The protein belongs to the type II pantothenate kinase family. In terms of assembly, homodimer.

The protein resides in the cytoplasm. The protein localises to the cytosol. The catalysed reaction is (R)-pantothenate + ATP = (R)-4'-phosphopantothenate + ADP + H(+). It functions in the pathway cofactor biosynthesis; coenzyme A biosynthesis; CoA from (R)-pantothenate: step 1/5. With respect to regulation, inhibited by acetyl-CoA. Inhibited by calcium hopantenate. Activated by palmitoylcarnitine. Functionally, catalyzes the phosphorylation of pantothenate to generate 4'-phosphopantothenate in the first and rate-determining step of coenzyme A (CoA) synthesis. This chain is Pantothenate kinase 2, mitochondrial (Pank2), found in Mus musculus (Mouse).